A 578-amino-acid polypeptide reads, in one-letter code: Transmembrane protein 121B (578 aa).

Disordered stretches follow at residues 1 to 84 and 106 to 129; these read MRPA…ESLS and AGPAPVAFSSSAATSSSTSTPTSS. Low complexity-rich tracts occupy residues 8–17 and 44–53; these read PRSVSSASGS and GDSSTSTSTS. Residues 54-67 show a composition bias toward gly residues; the sequence is RGGGGGRRGGGGGS. Ser-167 carries the phosphoserine modification. The tract at residues 529-557 is disordered; it reads RARGGYGAPPSAPPPPPPPPQGGSQLGHC. Residues 538–549 show a composition bias toward pro residues; that stretch reads PSAPPPPPPPPQ. Ser-552 carries the phosphoserine modification.

Belongs to the TMEM121 family. As to expression, widely expressed, especially in adult heart, brain, prostate, testes, peripherical blood leukocytes and fetal brain.

This chain is Transmembrane protein 121B, found in Homo sapiens (Human).